Consider the following 125-residue polypeptide: Holo-[acyl-carrier-protein] synthase (125 aa).

The Mg(2+) site is built by Asp8 and Glu57.

The protein belongs to the P-Pant transferase superfamily. AcpS family. It depends on Mg(2+) as a cofactor.

The protein resides in the cytoplasm. It catalyses the reaction apo-[ACP] + CoA = holo-[ACP] + adenosine 3',5'-bisphosphate + H(+). Its function is as follows. Transfers the 4'-phosphopantetheine moiety from coenzyme A to a Ser of acyl-carrier-protein. This chain is Holo-[acyl-carrier-protein] synthase, found in Neisseria meningitidis serogroup C (strain 053442).